A 689-amino-acid chain; its full sequence is MADLEAVLADVSYLMAMEKSKATPAARASKKILLPEPSIRSVMQKYLEDRGEVTFEKIFSQKLGYLLFRDFCLNHLEEAKPLVEFYEEIKKYEKLETEEERVVRSREIFDSYIMKELLACSHPFSKNATEHVQGHLVKKQVPPDLFQPYIEEICQNLRGDVFQKFIESDKFTRFCQWKNVELNIHLTMNDFSVHRIIGRGGFGEVYGCRKADTGKMYAMKCLDKKRIKMKQGETLALNERIMLSLVSTGDCPFIVCMSYAFHTPDKLSFILDLMNGGDLHYHLSQHGVFSEADMRFYAAEIILGLEHMHNRFVVYRDLKPANILLDEHGHVRISDLGLACDFSKKRPHASVGTHGYMAPEVLQKGVAYDSSADWFSLGCMLFKLLRGHSPFRQHKTKDKHEIDRMTLTMAVELPDSFSPELRSLLEGLLQRDVNRRLGCLGRGAQEVKESPFFRSLDWQMVFLQKYPPPLIPPRGEVNAADAFDIGSFDEEDTKGIKLLDSDQELYRNFPLTISERWQQEVAETVFDTINAETDRLEARKKAKNKQLGHEEDYALGKDCIVHGYMSKMGNPFLTQWQRRYFYLFPNRLEWRGEGEAPQSLLTMEEIQSVEETQIKERKCLLLKIRGGKQFVLQCDSDPELVQWKKELRDAYREAQQLVQRVPKMKNKPRSPVVELSKVPLIQRGSANGL.

An N-terminal region spans residues 1-190; sequence MADLEAVLAD…ELNIHLTMND (190 aa). Residues 54-175 form the RGS domain; the sequence is TFEKIFSQKL…IESDKFTRFC (122 aa). The Protein kinase domain maps to 191–453; the sequence is FSVHRIIGRG…AQEVKESPFF (263 aa). Residues 197–205 and lysine 220 contribute to the ATP site; that span reads IGRGGFGEV. Residue aspartate 317 is the Proton acceptor of the active site. One can recognise an AGC-kinase C-terminal domain in the interval 454–521; sequence RSLDWQMVFL…TISERWQQEV (68 aa). The PH domain maps to 558 to 652; that stretch reads DCIVHGYMSK…WKKELRDAYR (95 aa). Phosphoserine is present on serine 670.

This sequence belongs to the protein kinase superfamily. AGC Ser/Thr protein kinase family. GPRK subfamily. As to quaternary structure, interacts with the heterodimer formed by GNB1 and GNG2. Interacts with GIT1. Interacts with, and phosphorylates chemokine-stimulated CCR5. Interacts with ARRB1. Interacts with LPAR1 and LPAR2. Interacts with RALA in response to LPAR1 activation. ADRBK1 and RALA mutually inhibit each other's binding to LPAR1. Interacts with ADRB2.

Its subcellular location is the cytoplasm. The protein resides in the cell membrane. The protein localises to the postsynapse. It is found in the presynapse. The enzyme catalyses [beta-adrenergic receptor] + ATP = [beta-adrenergic receptor]-phosphate + ADP + H(+). With respect to regulation, in contrast to other AGC family kinases, the catalytic activity is solely regulated by the binding of substrates and ligands, not by phosphorylation of the kinase domain. Its function is as follows. Specifically phosphorylates the agonist-occupied form of the beta-adrenergic and closely related receptors, probably inducing a desensitization of them. Key regulator of LPAR1 signaling. Competes with RALA for binding to LPAR1 thus affecting the signaling properties of the receptor. Desensitizes LPAR1 and LPAR2 in a phosphorylation-independent manner. Positively regulates ciliary smoothened (SMO)-dependent Hedgehog (Hh) signaling pathway by facilitating the trafficking of SMO into the cilium and the stimulation of SMO activity. Inhibits relaxation of airway smooth muscle in response to blue light. This is Beta-adrenergic receptor kinase 1 from Mus musculus (Mouse).